The following is a 59-amino-acid chain: Sperm protamine P1-type (59 aa).

Residues 1–59 (MARYRRNRSRSRSRRRRRRRGGRGGRRGRRRRRHGQRRRGRRGRERTRRRRRRRRRSSS) form a disordered region.

This sequence belongs to the protamine P1 family. As to expression, testis.

It is found in the nucleus. It localises to the chromosome. In terms of biological role, protamines substitute for histones in the chromatin of sperm during the haploid phase of spermatogenesis. They compact sperm DNA into a highly condensed, stable and inactive complex. The polypeptide is Sperm protamine P1-type (Chrysemys picta bellii (Western painted turtle)).